A 100-amino-acid polypeptide reads, in one-letter code: Urease subunit gamma (100 aa).

Belongs to the urease gamma subunit family. Heterotrimer of UreA (gamma), UreB (beta) and UreC (alpha) subunits. Three heterotrimers associate to form the active enzyme.

It is found in the cytoplasm. It carries out the reaction urea + 2 H2O + H(+) = hydrogencarbonate + 2 NH4(+). It participates in nitrogen metabolism; urea degradation; CO(2) and NH(3) from urea (urease route): step 1/1. This Prochlorococcus marinus (strain NATL1A) protein is Urease subunit gamma.